The chain runs to 160 residues: Sec-independent protein translocase protein TatB (160 aa).

A helical transmembrane segment spans residues 1-21; that stretch reads MIDLGVSKIALIGAVALIVIG. Disordered stretches follow at residues 70–100 and 133–160; these read ARDV…STAT and RSGV…SSSF. The segment covering 89 to 100 has biased composition (polar residues); the sequence is SDATGSDASTAT.

It belongs to the TatB family. In terms of assembly, the Tat system comprises two distinct complexes: a TatABC complex, containing multiple copies of TatA, TatB and TatC subunits, and a separate TatA complex, containing only TatA subunits. Substrates initially bind to the TatABC complex, which probably triggers association of the separate TatA complex to form the active translocon.

The protein localises to the cell inner membrane. In terms of biological role, part of the twin-arginine translocation (Tat) system that transports large folded proteins containing a characteristic twin-arginine motif in their signal peptide across membranes. Together with TatC, TatB is part of a receptor directly interacting with Tat signal peptides. TatB may form an oligomeric binding site that transiently accommodates folded Tat precursor proteins before their translocation. The protein is Sec-independent protein translocase protein TatB of Polaromonas sp. (strain JS666 / ATCC BAA-500).